An 878-amino-acid chain; its full sequence is Microtubule-associated protein homolog maph-1.1 (878 aa).

Disordered stretches follow at residues 224-425 (ALSD…AQAT) and 456-518 (EIPP…PVVP). 4 stretches are compositionally biased toward low complexity: residues 241 to 268 (PSAR…APRA), 278 to 293 (SRPT…PRTA), 310 to 321 (APTRAPVPARSA), and 328 to 339 (APAKPAANTAKA). Composition is skewed to basic and acidic residues over residues 416–425 (PPRHEVAQAT) and 480–496 (EEDK…KPDP).

It belongs to the MAP1A/MAP1B/MAP1S family. Interacts with dlg-1.

It is found in the cell projection. The protein resides in the dendrite. The protein localises to the perikaryon. It localises to the axon. Its subcellular location is the cytoplasm. It is found in the cytoskeleton. This Caenorhabditis elegans protein is Microtubule-associated protein homolog maph-1.1.